A 1003-amino-acid polypeptide reads, in one-letter code: MNGGNESSGADRAGGPVATSVPIGWQRCVREGAVLYISPSGTELSSLEQTRSYLLSDGTCKCGLECPLNVPKVFNFDPLAPVTPGGAGVGPASEEDMTKLCNHRRKAVAMATLYRSMETTCSHSSPGEGASPQMFHTVSPGPPSARPPCRVPPTTPLNGGPGSLPPEPPSVSQAFPTLAGPGGLFPPRLADPVPSGGSSSPRFLPRGNAPSPAPPPPPAISLNAPSYNWGAALRSSLVPSDLGSPPAPHASSSPPSDPPLFHCSDALTPPPLPPSNNLPAHPGPASQPPVSSATMHLPLVLGPLGGAPTVEGPGAPPFLASSLLSAAAKAQHPPLPPPSTLQGRRPRAQAPSASHSSSLRPSQRRPRRPPTVFRLLEGRGPQTPRRSRPRAPAPVPQPFSLPEPSQPILPSVLSLLGLPTPGPSHSDGSFNLLGSDAHLPPPPTLSSGSPPQPRHPIQPSLPGTTSGSLSSVPGAPAPPAASKAPVVPSPVLQSPSEGLGMGAGPACPLPPLAGGEAFPFPSPEQGLALSGAGFPGMLGALPLPLSLGQPPPSPLLNHSLFGVLTGGGGQPPPEPLLPPPGGPGPPLAPGEPEGPSLLVASLLPPPPSDLLPPPSAPPSNLLASFLPLLALGPTAGDGEGSAEGAGGPSGEPFSGLGDLSPLLFPPLSAPPTLIALNSALLAATLDPPSGTPPQPCVLSAPQPGPPTSSVTTATTDPGASSLGKAPSNSGRPPQLLSPLLGASLLGDLSSLTSSPGALPSLLQPPGPLLSGQLGLQLLPGGGAPPPLSEASSPLACLLQSLQIPPEQPEAPCLPPESPASALEPEPARPPLSALAPPHGSPDPPVPELLTGRGSGKRGRRGGGGLRGINGEARPARGRKPGSRREPGRLALKWGTRGGFNGQMERSPRRTHHWQHNGELAEGGAEPKDPPPPGPHSEDLKVPPGVVRKSRRGRRRKYNPTRNSNSSRQDITLEPSPTARAAVPLPPRARPGRPAKNKRRKLAP.

The MBD domain occupies 11–81 (DRAGGPVATS…KVFNFDPLAP (71 aa)). Residues 57–68 (DGTCKCGLECPL) are required for interaction with ASXL1/2/3. 3 disordered regions span residues 120–219 (TCSH…PPPA), 238–664 (VPSD…PLLF), and 683–1003 (ATLD…KLAP). Composition is skewed to pro residues over residues 140 to 155 (PGPP…PPTT) and 268 to 287 (TPPP…PASQ). Composition is skewed to low complexity over residues 297-308 (LPLVLGPLGGAP), 319-328 (LASSLLSAAA), and 348-361 (AQAP…SLRP). Residues 391-407 (APAPVPQPFSLPEPSQP) are compositionally biased toward pro residues. The span at 408–426 (ILPSVLSLLGLPTPGPSHS) shows a compositional bias: low complexity. Residues 439 to 456 (LPPPPTLSSGSPPQPRHP) show a composition bias toward pro residues. 2 stretches are compositionally biased toward low complexity: residues 460–498 (SLPG…PSEG) and 531–548 (GAGF…LSLG). Over residues 570-589 (QPPPEPLLPPPGGPGPPLAP) the composition is skewed to pro residues. Low complexity predominate over residues 590–602 (GEPEGPSLLVASL). Residues 603–617 (LPPPPSDLLPPPSAP) are compositionally biased toward pro residues. Residues 618–633 (PSNLLASFLPLLALGP) show a composition bias toward low complexity. Residues 635–649 (AGDGEGSAEGAGGPS) show a composition bias toward gly residues. Positions 650–662 (GEPFSGLGDLSPL) are enriched in low complexity. Over residues 707-718 (TSSVTTATTDPG) the composition is skewed to polar residues. Low complexity-rich tracts occupy residues 732 to 761 (PPQL…LPSL), 768 to 778 (LLSGQLGLQLL), and 788 to 798 (SEASSPLACLL). Residues 805 to 817 (PEQPEAPCLPPES) show a composition bias toward pro residues. Low complexity predominate over residues 818 to 837 (PASALEPEPARPPLSALAPP). Residues 947–958 (RKSRRGRRRKYN) are compositionally biased toward basic residues. A compositionally biased stretch (polar residues) spans 959–969 (PTRNSNSSRQD). Residues 989–1003 (RPGRPAKNKRRKLAP) show a composition bias toward basic residues.

As to quaternary structure, core component of the polycomb repressive deubiquitinase (PR-DUB) complex, at least composed of BAP1, one of ASXL1, ASXL2 or (probably) ASXL3, and one of MBD5 or MBD6. Distinct combinations of ASXL and MBD proteins may preferentially bind specific histone modification marks. The PR-DUB core associates with a number of accessory proteins, including FOXK1, FOXK2, KDM1B, HCFC1 and OGT; KDM1B specifically associates with ASXL2 PR-DUB complexes. Interacts (via MBD domain) with ASXL1, ASXL2 and ASXL3 (via PHD domain); the interaction is probably direct, mediates association with other PR-DUB complex core components.

The protein localises to the nucleus. It localises to the chromosome. Its function is as follows. Non-catalytic component of the polycomb repressive deubiquitinase (PR-DUB) complex, a complex that specifically mediates deubiquitination of histone H2A monoubiquitinated at 'Lys-120' (H2AK119ub1). Important for stability of PR-DUB components and stimulating its ubiquitinase activity. As part of the PR-DUB complex, associates with chromatin enriched in histone marks H3K4me1, H3K4me3, and H3K27Ac, but not in H3K27me3. MBD5 and MBD6 containing complexes associate with distinct chromatin regions enriched in genes involved in different pathways. Heterochromatin recruitment is not mediated by DNA methylation. The PR-DUB complex is an epigenetic regulator of gene expression, including genes involved in development, cell communication, signaling, cell proliferation and cell viability; may promote cancer cell growth. The sequence is that of Methyl-CpG-binding domain protein 6 (MBD6) from Homo sapiens (Human).